Reading from the N-terminus, the 398-residue chain is Cysteine protease ATG4A (398 aa).

Catalysis depends on cysteine 77, which acts as the Nucleophile. Residues aspartate 279 and histidine 281 contribute to the active site. The short motif at 393–396 is the LIR element; sequence FEIL.

This sequence belongs to the peptidase C54 family. In terms of assembly, interacts with ATG9A; the interaction is direct.

It localises to the cytoplasm. The enzyme catalyses [protein]-C-terminal L-amino acid-glycyl-phosphatidylethanolamide + H2O = [protein]-C-terminal L-amino acid-glycine + a 1,2-diacyl-sn-glycero-3-phosphoethanolamine. With respect to regulation, inhibited by N-ethylmaleimide. Redox-regulated during autophagy since reducing conditions activate ATG4A whereas an oxidizing environment such as the presence of H(2)O(2) inhibits its activity. In terms of biological role, cysteine protease that plays a key role in autophagy by mediating both proteolytic activation and delipidation of ATG8 family proteins. The protease activity is required for proteolytic activation of ATG8 family proteins: cleaves the C-terminal amino acid of ATG8 proteins to reveal a C-terminal glycine. Exposure of the glycine at the C-terminus is essential for ATG8 proteins conjugation to phosphatidylethanolamine (PE) and insertion to membranes, which is necessary for autophagy. Preferred substrate is GABARAPL2 followed by MAP1LC3A and GABARAP. Protease activity is also required to counteract formation of high-molecular weight conjugates of ATG8 proteins (ATG8ylation): acts as a deubiquitinating-like enzyme that removes ATG8 conjugated to other proteins, such as ATG3. In addition to the protease activity, also mediates delipidation of ATG8 family proteins. Catalyzes delipidation of PE-conjugated forms of ATG8 proteins during macroautophagy. Compared to ATG4B, the major protein for proteolytic activation of ATG8 proteins, shows weaker ability to cleave the C-terminal amino acid of ATG8 proteins, while it displays stronger delipidation activity. Involved in phagophore growth during mitophagy independently of its protease activity and of ATG8 proteins: acts by regulating ATG9A trafficking to mitochondria and promoting phagophore-endoplasmic reticulum contacts during the lipid transfer phase of mitophagy. This Homo sapiens (Human) protein is Cysteine protease ATG4A.